Here is a 205-residue protein sequence, read N- to C-terminus: Methylthioribulose-1-phosphate dehydratase (205 aa).

Residues histidine 95 and histidine 97 each coordinate Zn(2+).

The protein belongs to the aldolase class II family. MtnB subfamily. The cofactor is Zn(2+).

The enzyme catalyses 5-(methylsulfanyl)-D-ribulose 1-phosphate = 5-methylsulfanyl-2,3-dioxopentyl phosphate + H2O. It functions in the pathway amino-acid biosynthesis; L-methionine biosynthesis via salvage pathway; L-methionine from S-methyl-5-thio-alpha-D-ribose 1-phosphate: step 2/6. In terms of biological role, catalyzes the dehydration of methylthioribulose-1-phosphate (MTRu-1-P) into 2,3-diketo-5-methylthiopentyl-1-phosphate (DK-MTP-1-P). In Microcystis aeruginosa (strain NIES-843 / IAM M-2473), this protein is Methylthioribulose-1-phosphate dehydratase.